The following is a 787-amino-acid chain: Patatin-like phospholipase domain-containing protein OOU_Y34scaffold00095g16.3 (787 aa).

2 disordered regions span residues 47-69 and 137-164; these read APDT…ARSF and KVVG…PGRR. A compositionally biased stretch (low complexity) spans 59–69; that stretch reads ASPRSPSARSF. Residues 144 to 157 show a composition bias toward basic residues; the sequence is HRQKKSSRRRKRSK. A helical transmembrane segment spans residues 180–200; sequence WPFLLIVGAWIVGLAVTYLFT. The PNPLA domain maps to 375 to 566; sequence LCLSGGASFA…RTDIPIRALN (192 aa). Positions 406–410 match the GXSXG motif; it reads GTSGG. Catalysis depends on Ser408, which acts as the Nucleophile. The active-site Proton acceptor is Asp553. Positions 745 to 787 are disordered; that stretch reads GTDEEITTNDEMEFASDEKAVLTEDEGQFDGVTDNTEGSPLLK. Acidic residues predominate over residues 746–759; sequence TDEEITTNDEMEFA. Residues 777–787 show a composition bias toward polar residues; sequence TDNTEGSPLLK.

Belongs to the PLPL family.

The protein resides in the membrane. Its function is as follows. Probable lipid hydrolase. This chain is Patatin-like phospholipase domain-containing protein OOU_Y34scaffold00095g16.3, found in Pyricularia oryzae (strain Y34) (Rice blast fungus).